A 501-amino-acid chain; its full sequence is Cytochrome P450 monooxygenase notH (501 aa).

Residues 11–31 (LGLESVGWVLGLLTTSILYLF) form a helical membrane-spanning segment. Asparagine 298 is a glycosylation site (N-linked (GlcNAc...) asparagine). Cysteine 442 is a heme binding site.

This sequence belongs to the cytochrome P450 family. The cofactor is heme.

It is found in the membrane. It participates in alkaloid biosynthesis. In terms of biological role, cytochrome P450 monooxygenase; part of the gene cluster that mediates the biosynthesis of notoamide, a fungal indole alkaloid that belongs to a family of natural products containing a characteristic bicyclo[2.2.2]diazaoctane core. The first step of notoamide biosynthesis involves coupling of L-proline and L-tryptophan by the bimodular NRPS notE, to produce cyclo-L-tryptophan-L-proline called brevianamide F. The reverse prenyltransferase notF then acts as a deoxybrevianamide E synthase and converts brevianamide F to deoxybrevianamide E via reverse prenylation at C-2 of the indole ring leading to the bicyclo[2.2.2]diazaoctane core. Deoxybrevianamide E is further hydroxylated at C-6 of the indole ring, likely catalyzed by the cytochrome P450 monooxygenase notG, to yield 6-hydroxy-deoxybrevianamide E. 6-hydroxy-deoxybrevianamide E is a specific substrate of the prenyltransferase notC for normal prenylation at C-7 to produce 6-hydroxy-7-prenyl-deoxybrevianamide, also called notoamide S. As the proposed pivotal branching point in notoamide biosynthesis, notoamide S can be diverted to notoamide E through an oxidative pyran ring closure putatively catalyzed by either notH cytochrome P450 monooxygenase or the notD FAD-linked oxidoreductase. This step would be followed by an indole 2,3-epoxidation-initiated pinacol-like rearrangement catalyzed by the notB FAD-dependent monooxygenase leading to the formation of notoamide C and notoamide D. On the other hand notoamide S is converted to notoamide T by notH (or notD), a bifunctional oxidase that also functions as the intramolecular Diels-Alderase responsible for generation of (+)-notoamide T. To generate antipodal (-)-notoaminide T, notH' (or notD') in Aspergillus versicolor is expected to catalyze a Diels-Alder reaction leading to the opposite stereochemistry. The remaining oxidoreductase notD (or notH) likely catalyzes the oxidative pyran ring formation to yield (+)-stephacidin A. The FAD-dependent monooxygenase notI is highly similar to notB and is predicted to catalyze a similar conversion from (+)-stephacidin A to (-)-notoamide B via the 2,3-epoxidation of (+)-stephacidin A followed by a pinacol-type rearrangement. Finally, it remains unclear which enzyme could be responsible for the final hydroxylation steps leading to notoamide A and sclerotiamide. This is Cytochrome P450 monooxygenase notH from Aspergillus sp. (strain MF297-2).